A 170-amino-acid chain; its full sequence is Zinc finger A20 and AN1 domain-containing stress-associated protein 6 (170 aa).

The segment at 10-44 (PESNRLCVNNCGFLGSSATMNLCSNCYGDLCLKQQ) adopts an A20-type zinc-finger fold. 4 residues coordinate Zn(2+): cysteine 16, cysteine 20, cysteine 32, and cysteine 35. The interval 53–76 (TVESSLSVSPPSSSSSEISSPIIP) is disordered. The AN1-type zinc-finger motif lies at 105–151 (QQRPNRCTTCRKRVGLTGFKCRCGTMFCGVHRYPEIHGCSYDFKSAG). 8 residues coordinate Zn(2+): cysteine 111, cysteine 114, cysteine 125, cysteine 127, cysteine 132, histidine 135, histidine 141, and cysteine 143.

In terms of biological role, may be involved in environmental stress response. The protein is Zinc finger A20 and AN1 domain-containing stress-associated protein 6 (SAP6) of Arabidopsis thaliana (Mouse-ear cress).